A 359-amino-acid chain; its full sequence is HTH-type transcriptional regulator Rv3575c (359 aa).

Residues 9–64 (ATLASLAAELKVSRTTVSNAFNRPDQLSADLRERVLATAKRLGYAGPDPVARSLRT) enclose the HTH lacI-type domain. The H-T-H motif DNA-binding region spans 11–30 (LASLAAELKVSRTTVSNAFN).

Transcriptional regulator that negatively regulates transcription of the mce4 operon, which is involved in cholesterol transport and utilization. Acts by binding to the promoter region of the mce4 operon. It affects the utilization of host cholesterol as a carbon source, impacting the host's innate immune response. This chain is HTH-type transcriptional regulator Rv3575c, found in Mycobacterium tuberculosis (strain ATCC 25618 / H37Rv).